The chain runs to 268 residues: UPF0294 protein ETA_26410 (268 aa).

It belongs to the UPF0294 family.

It localises to the cytoplasm. The chain is UPF0294 protein ETA_26410 from Erwinia tasmaniensis (strain DSM 17950 / CFBP 7177 / CIP 109463 / NCPPB 4357 / Et1/99).